The primary structure comprises 189 residues: Peptidyl-tRNA hydrolase (189 aa).

Tyr-14 contacts tRNA. His-19 functions as the Proton acceptor in the catalytic mechanism. The tRNA site is built by Tyr-64, Asn-66, and Asn-112.

This sequence belongs to the PTH family. In terms of assembly, monomer.

It localises to the cytoplasm. It catalyses the reaction an N-acyl-L-alpha-aminoacyl-tRNA + H2O = an N-acyl-L-amino acid + a tRNA + H(+). Its function is as follows. Hydrolyzes ribosome-free peptidyl-tRNAs (with 1 or more amino acids incorporated), which drop off the ribosome during protein synthesis, or as a result of ribosome stalling. Catalyzes the release of premature peptidyl moieties from peptidyl-tRNA molecules trapped in stalled 50S ribosomal subunits, and thus maintains levels of free tRNAs and 50S ribosomes. The chain is Peptidyl-tRNA hydrolase from Clostridium botulinum (strain Okra / Type B1).